A 1659-amino-acid chain; its full sequence is Fatty acid synthase subunit alpha (1659 aa).

The interval threonine 114–proline 139 is disordered. In terms of domain architecture, Carrier spans alanine 160–glutamine 235. Position 195 is an O-(pantetheine 4'-phosphoryl)serine (serine 195). The interval glycine 588 to serine 826 is ketoreductase (KR) domain. Residues lysine 1030 to histidine 1575 enclose the Ketosynthase family 3 (KS3) domain. Active-site for beta-ketoacyl synthase activity residues include cysteine 1217, histidine 1458, and histidine 1499. Residues glutamate 1631–proline 1659 are disordered.

Belongs to the thiolase-like superfamily. Fungal fatty acid synthetase subunit alpha family. As to quaternary structure, [Alpha(6)beta(6)] hexamers of two multifunctional subunits (alpha and beta). Post-translationally, 4'-phosphopantetheine is transferred from CoA to a specific serine of the acyl carrier domain by the C-terminal PPT domain. This modification is essential for activity because fatty acids are bound in thioester linkage to the sulfhydryl of the prosthetic group.

It catalyses the reaction acetyl-CoA + n malonyl-CoA + 2n NADPH + 4n H(+) = a long-chain-acyl-CoA + n CoA + n CO2 + 2n NADP(+).. The enzyme catalyses a fatty acyl-[ACP] + malonyl-[ACP] + H(+) = a 3-oxoacyl-[ACP] + holo-[ACP] + CO2. The catalysed reaction is a (3R)-hydroxyacyl-[ACP] + NADP(+) = a 3-oxoacyl-[ACP] + NADPH + H(+). The protein operates within secondary metabolite biosynthesis. In terms of biological role, fatty acid synthase subunit alpha; part of the gene cluster that mediates the biosynthesis of aspercryptins, linear lipopeptides built from six amino acids including 2 highly unusual and nonproteogenic amino acids, 2-amino-octanoic acid (2aoa) and 2-amino-dodecanol (2adol). The core structure of aspercryptins is as follows: Ser/Ala-Thr-Ile/Val-2aoa-Asn-2adol. The first step of aspercryptin biosynthesis is the generation of the fatty acid precursors, octanoic and dodecanoic acids, by the FAS subunits atnF and atnM. The fatty acid precursors are likely transformed into the corresponding alpha-amino fatty acids in three steps. First, they are hydroxylated by the cytochrome P450 monooxygenase atnE, then oxidized to the corresponding alpha-keto acids by the NAD(P)-dependent oxidoreductase atnD, and finally converted to the alpha-amino fatty acids by the PLP-dependent aminotransferases atnH or atnJ. the alpha-amino fatty acids, 2-amino-octanoic and 2-amino-dodecanoic acids, are recognized, activated, and covalently tethered to the NRPS atnA by its fourth and sixth adenylation domains. The second module of atnA is the Thr module and contains an epimerase (E) domain responsible for the epimerization of Thr to D-allo-Thr. Additionally, despite atnA having only one epimerase domain, the first amino acid of aspercryptin A1 is D-Ser, suggesting that serine is either loaded directly as D-Ser on the first module or that the epimerase domain in the threonine module epimerizes both L-Ser and L-Thr. After condensation of the hexapeptide of aspercryptin, the C-terminal reductase (TE) domain might be involved in the reductive release and production of the aldehyde hexapeptide. Further reduction would generate aspercryptins. The variety of aspercryptins produced reflects the flexibility of the atnA NRPS, allowing incorporation of alanine instead of serine, valine for isoleucine, and a C10 fatty amino alcohol instead of the C12 version. AtnB seems to be involved in the selectivity for Ile versus Val by the third module. Moreover, type B, C and D aspercryptins have an additional N-terminal cichorine, acetyl and propionyl group respectively. This chain is Fatty acid synthase subunit alpha, found in Emericella nidulans (strain FGSC A4 / ATCC 38163 / CBS 112.46 / NRRL 194 / M139) (Aspergillus nidulans).